Here is a 469-residue protein sequence, read N- to C-terminus: Glutamate--tRNA ligase (469 aa).

Residues 11–21 (PSPTGFIHLGN) carry the 'HIGH' region motif. Residues 118–131 (GEKPRYDGTWRPEP) show a composition bias toward basic and acidic residues. The segment at 118-139 (GEKPRYDGTWRPEPGKVLPEPP) is disordered. Residues 243–247 (KMSKR) carry the 'KMSKS' region motif. An ATP-binding site is contributed by K246.

Belongs to the class-I aminoacyl-tRNA synthetase family. Glutamate--tRNA ligase type 1 subfamily. In terms of assembly, monomer.

Its subcellular location is the cytoplasm. It carries out the reaction tRNA(Glu) + L-glutamate + ATP = L-glutamyl-tRNA(Glu) + AMP + diphosphate. Catalyzes the attachment of glutamate to tRNA(Glu) in a two-step reaction: glutamate is first activated by ATP to form Glu-AMP and then transferred to the acceptor end of tRNA(Glu). The chain is Glutamate--tRNA ligase from Burkholderia mallei (strain NCTC 10247).